The chain runs to 252 residues: 3-dehydroquinate dehydratase (252 aa).

3-dehydroquinate-binding positions include Ser21, 46-48, and Arg82; that span reads EWR. His143 serves as the catalytic Proton donor/acceptor. Residue Lys170 is the Schiff-base intermediate with substrate of the active site. Arg213, Ser232, and Gln236 together coordinate 3-dehydroquinate.

Belongs to the type-I 3-dehydroquinase family. As to quaternary structure, homodimer.

It carries out the reaction 3-dehydroquinate = 3-dehydroshikimate + H2O. Its pathway is metabolic intermediate biosynthesis; chorismate biosynthesis; chorismate from D-erythrose 4-phosphate and phosphoenolpyruvate: step 3/7. Its function is as follows. Involved in the third step of the chorismate pathway, which leads to the biosynthesis of aromatic amino acids. Catalyzes the cis-dehydration of 3-dehydroquinate (DHQ) and introduces the first double bond of the aromatic ring to yield 3-dehydroshikimate. The polypeptide is 3-dehydroquinate dehydratase (Escherichia coli (strain K12 / MC4100 / BW2952)).